Consider the following 616-residue polypeptide: Large ribosomal subunit assembly factor BipA (616 aa).

A tr-type G domain is found at 8–204 (KKLRNIAIIA…AIVKHVEPPK (197 aa)). GTP-binding positions include 20-25 (DHGKTT) and 134-137 (NKVD).

This sequence belongs to the TRAFAC class translation factor GTPase superfamily. Classic translation factor GTPase family. BipA subfamily. In terms of assembly, monomer.

It is found in the cytoplasm. It carries out the reaction GTP + H2O = GDP + phosphate + H(+). Its function is as follows. A 50S ribosomal subunit assembly protein with GTPase activity, required for 50S subunit assembly at low temperatures, may also play a role in translation. Binds GTP and analogs. Binds the 70S ribosome between the 30S and 50S subunits, in a similar position as ribosome-bound EF-G; it contacts a number of ribosomal proteins, both rRNAs and the A-site tRNA. In Haemophilus influenzae (strain ATCC 51907 / DSM 11121 / KW20 / Rd), this protein is Large ribosomal subunit assembly factor BipA.